Consider the following 192-residue polypeptide: Endoribonuclease YbeY (192 aa).

Zn(2+)-binding residues include H109, H113, and H119. The interval V142–R192 is disordered. Residues T159–G180 are compositionally biased toward low complexity.

It belongs to the endoribonuclease YbeY family. Zn(2+) serves as cofactor.

It is found in the cytoplasm. Single strand-specific metallo-endoribonuclease involved in late-stage 70S ribosome quality control and in maturation of the 3' terminus of the 16S rRNA. This chain is Endoribonuclease YbeY, found in Anaeromyxobacter sp. (strain Fw109-5).